The primary structure comprises 216 residues: Large ribosomal subunit protein uL3 (216 aa).

Residues 136-155 (GVSISHRSHGSTGQRQDPGK) are disordered. Position 151 is an N5-methylglutamine (glutamine 151).

This sequence belongs to the universal ribosomal protein uL3 family. As to quaternary structure, part of the 50S ribosomal subunit. Forms a cluster with proteins L14 and L19. Post-translationally, methylated by PrmB.

Functionally, one of the primary rRNA binding proteins, it binds directly near the 3'-end of the 23S rRNA, where it nucleates assembly of the 50S subunit. This Rickettsia prowazekii (strain Madrid E) protein is Large ribosomal subunit protein uL3.